Here is a 99-residue protein sequence, read N- to C-terminus: Nucleoid-associated protein EbfC (99 aa).

Belongs to the YbaB/EbfC family. In terms of assembly, homodimer.

The protein localises to the cytoplasm. The protein resides in the nucleoid. Binds to DNA and alters its conformation. May be involved in regulation of gene expression, nucleoid organization and DNA protection. The polypeptide is Nucleoid-associated protein EbfC (Borrelia hermsii (strain HS1 / DAH)).